The primary structure comprises 166 residues: Sec-independent protein translocase protein TatB (166 aa).

The chain crosses the membrane as a helical span at residues 2–22 (FNDIGALELLTLGVLAVLVFG). The interval 110-166 (TPAASDTANSAVNGSAGAAADGVTTSLTKTGETTPDLLKKAPQQAQPERPPFDADAT) is disordered. Residues 117-129 (ANSAVNGSAGAAA) show a composition bias toward low complexity. A compositionally biased stretch (polar residues) spans 132–142 (VTTSLTKTGET).

This sequence belongs to the TatB family. In terms of assembly, the Tat system comprises two distinct complexes: a TatABC complex, containing multiple copies of TatA, TatB and TatC subunits, and a separate TatA complex, containing only TatA subunits. Substrates initially bind to the TatABC complex, which probably triggers association of the separate TatA complex to form the active translocon.

Its subcellular location is the cell membrane. Its function is as follows. Part of the twin-arginine translocation (Tat) system that transports large folded proteins containing a characteristic twin-arginine motif in their signal peptide across membranes. Together with TatC, TatB is part of a receptor directly interacting with Tat signal peptides. TatB may form an oligomeric binding site that transiently accommodates folded Tat precursor proteins before their translocation. The chain is Sec-independent protein translocase protein TatB from Streptomyces griseus subsp. griseus (strain JCM 4626 / CBS 651.72 / NBRC 13350 / KCC S-0626 / ISP 5235).